Here is a 266-residue protein sequence, read N- to C-terminus: 3-methyl-2-oxobutanoate hydroxymethyltransferase (266 aa).

The Mg(2+) site is built by Asp-45 and Asp-84. 3-methyl-2-oxobutanoate-binding positions include 45–46 (DS), Asp-84, and Lys-113. Glu-115 is a binding site for Mg(2+). Glu-183 serves as the catalytic Proton acceptor.

The protein belongs to the PanB family. As to quaternary structure, homodecamer; pentamer of dimers. Mg(2+) is required as a cofactor.

It is found in the cytoplasm. The enzyme catalyses 3-methyl-2-oxobutanoate + (6R)-5,10-methylene-5,6,7,8-tetrahydrofolate + H2O = 2-dehydropantoate + (6S)-5,6,7,8-tetrahydrofolate. The protein operates within cofactor biosynthesis; (R)-pantothenate biosynthesis; (R)-pantoate from 3-methyl-2-oxobutanoate: step 1/2. Functionally, catalyzes the reversible reaction in which hydroxymethyl group from 5,10-methylenetetrahydrofolate is transferred onto alpha-ketoisovalerate to form ketopantoate. This is 3-methyl-2-oxobutanoate hydroxymethyltransferase from Coxiella burnetii (strain Dugway 5J108-111).